The primary structure comprises 651 residues: Acetyl-coenzyme A synthetase (651 aa).

CoA contacts are provided by residues 189 to 192 (RGGK), T311, and N335. Residues 387-389 (GEP), 411-416 (DTWWQT), D500, and R515 contribute to the ATP site. CoA is bound at residue S523. R526 serves as a coordination point for ATP. 3 residues coordinate Mg(2+): V537, H539, and V542. Residue R586 coordinates CoA. The residue at position 611 (K611) is an N6-acetyllysine.

This sequence belongs to the ATP-dependent AMP-binding enzyme family. Mg(2+) serves as cofactor. In terms of processing, acetylated. Deacetylation by the SIR2-homolog deacetylase activates the enzyme.

The enzyme catalyses acetate + ATP + CoA = acetyl-CoA + AMP + diphosphate. Its function is as follows. Catalyzes the conversion of acetate into acetyl-CoA (AcCoA), an essential intermediate at the junction of anabolic and catabolic pathways. AcsA undergoes a two-step reaction. In the first half reaction, AcsA combines acetate with ATP to form acetyl-adenylate (AcAMP) intermediate. In the second half reaction, it can then transfer the acetyl group from AcAMP to the sulfhydryl group of CoA, forming the product AcCoA. This is Acetyl-coenzyme A synthetase from Brucella melitensis biotype 2 (strain ATCC 23457).